A 90-amino-acid chain; its full sequence is Kunitz-type serine protease inhibitor C1 (90 aa).

Positions 1–24 (MSSGGLLLLLGLLTLWAELTPISG) are cleaved as a signal peptide. At Gln25 the chain carries Pyrrolidone carboxylic acid. In terms of domain architecture, BPTI/Kunitz inhibitor spans 31 to 81 (CNLAPESGRCRGHLRRIYYNPDSNKCEVFFYGGCGGNDNNFETRKKCRQTC). 3 disulfide bridges follow: Cys31–Cys81, Cys40–Cys64, and Cys56–Cys77. The propeptide occupies 85–90 (RKGRPT).

The protein belongs to the venom Kunitz-type family. In terms of tissue distribution, expressed by the venom gland.

Its subcellular location is the secreted. Serine protease inhibitor that inhibits trypsin. In Daboia siamensis (Eastern Russel's viper), this protein is Kunitz-type serine protease inhibitor C1.